The primary structure comprises 330 residues: Aspartate--ammonia ligase (330 aa).

The protein belongs to the class-II aminoacyl-tRNA synthetase family. AsnA subfamily.

It is found in the cytoplasm. The enzyme catalyses L-aspartate + NH4(+) + ATP = L-asparagine + AMP + diphosphate + H(+). The protein operates within amino-acid biosynthesis; L-asparagine biosynthesis; L-asparagine from L-aspartate (ammonia route): step 1/1. The sequence is that of Aspartate--ammonia ligase from Streptococcus pyogenes serotype M6 (strain ATCC BAA-946 / MGAS10394).